Reading from the N-terminus, the 402-residue chain is MGDFQKVVLAYSGGVDTSACIPYLKNEYGVEEIIAFAADLGQGEELEVVRKKALLAGAKESLVDDLIEPFIHDFAFPAIRANALYEGRYPLSTALARPLIASRLVELAREMEAGAVAHGCTGKGNDQVRFDLAISSLAPHLKILTPAREWSMSRQELISYGEKFGIPAPVSKKSPYSIDLNLLGRSIEAGPLEDPFLAPREEVFQITSSIQESPDTPEEIEIQFEAGNPIAINGVTLDPVSIIKKANALAGRHGFGRIDMIENRVVGIKSREIYEAPGLMLLIKCHQEIESITLSADVLRTKVGIERQWADLVYQGFWFSPLKNALDAFIDRTQLDVNGSVKIQLFKGNATIQGRQSYSNSLYLPDIATYSAEDQYDHKSAEGFIYVWGLANRLWASINRDK.

Residues 10-18 and alanine 38 contribute to the ATP site; that span reads AYSGGVDTS. Tyrosine 89 is an L-citrulline binding site. Glycine 119 serves as a coordination point for ATP. Threonine 121, asparagine 125, and aspartate 126 together coordinate L-aspartate. Asparagine 125 is an L-citrulline binding site. 5 residues coordinate L-citrulline: arginine 129, serine 177, serine 186, glutamate 262, and tyrosine 274.

The protein belongs to the argininosuccinate synthase family. Type 1 subfamily. Homotetramer.

It localises to the cytoplasm. The enzyme catalyses L-citrulline + L-aspartate + ATP = 2-(N(omega)-L-arginino)succinate + AMP + diphosphate + H(+). It functions in the pathway amino-acid biosynthesis; L-arginine biosynthesis; L-arginine from L-ornithine and carbamoyl phosphate: step 2/3. The protein is Argininosuccinate synthase of Prochlorococcus marinus (strain SARG / CCMP1375 / SS120).